We begin with the raw amino-acid sequence, 114 residues long: Dolichyl-diphosphooligosaccharide--protein glycosyltransferase subunit DAD2 (114 aa).

Residues 1–30 (MPKAAGDAKLLIQSLNKAYAATPTNLKIID) lie on the Cytoplasmic side of the membrane. A helical membrane pass occupies residues 31 to 51 (LYVVFAVATALVQVVYMGIVG). Over 52 to 54 (SFP) the chain is Lumenal. A helical transmembrane segment spans residues 55–75 (FNSFLSGVLSSIGTAVLGVCL). The Cytoplasmic segment spans residues 76-93 (RIQVNKDNKEFKDLPPER). The chain crosses the membrane as a helical span at residues 94–114 (AFADFVLCNLVLHLVIMNFLG).

Belongs to the DAD/OST2 family. As to quaternary structure, component of the oligosaccharyltransferase (OST) complex.

Its subcellular location is the endoplasmic reticulum membrane. Its pathway is protein modification; protein glycosylation. Functionally, subunit of the oligosaccharyl transferase (OST) complex that catalyzes the initial transfer of a defined glycan (Glc(3)Man(9)GlcNAc(2) in eukaryotes) from the lipid carrier dolichol-pyrophosphate to an asparagine residue within an Asn-X-Ser/Thr consensus motif in nascent polypeptide chains, the first step in protein N-glycosylation. N-glycosylation occurs cotranslationally and the complex associates with the Sec61 complex at the channel-forming translocon complex that mediates protein translocation across the endoplasmic reticulum (ER). All subunits are required for a maximal enzyme activity. The chain is Dolichyl-diphosphooligosaccharide--protein glycosyltransferase subunit DAD2 (DAD2) from Hordeum vulgare (Barley).